A 177-amino-acid chain; its full sequence is Alkyl hydroperoxide reductase AhpD (177 aa).

The active-site Proton donor is the C130. An intrachain disulfide couples C130 to C133. The active-site Cysteine sulfenic acid (-SOH) intermediate is the C133.

It belongs to the AhpD family. In terms of assembly, homotrimer.

It catalyses the reaction N(6)-[(R)-dihydrolipoyl]-L-lysyl-[lipoyl-carrier protein] + a hydroperoxide = N(6)-[(R)-lipoyl]-L-lysyl-[lipoyl-carrier protein] + an alcohol + H2O. In terms of biological role, antioxidant protein with alkyl hydroperoxidase activity. Required for the reduction of the AhpC active site cysteine residues and for the regeneration of the AhpC enzyme activity. This is Alkyl hydroperoxide reductase AhpD from Mycolicibacterium smegmatis (strain ATCC 700084 / mc(2)155) (Mycobacterium smegmatis).